The sequence spans 261 residues: Cytochrome c oxidase subunit 3 (261 aa).

At 1-15 (MTHQSHAYHMVKPSP) the chain is on the mitochondrial matrix side. A helical transmembrane segment spans residues 16–34 (WPLTGALSALLMTSGLAMW). The Mitochondrial intermembrane portion of the chain corresponds to 35 to 40 (FHFHSM). A helical transmembrane segment spans residues 41–66 (TLLMLGLLTNTLTMYQWWRDVTREST). Over 67 to 72 (YQGHHT) the chain is Mitochondrial matrix. The chain crosses the membrane as a helical span at residues 73 to 105 (PPVQKGLRYGMILFITSEVFFFAGFFWAFYHSS). At 106-128 (LAPTPQLGGHWPPTGITPLNPLE) the chain is on the mitochondrial intermembrane side. A helical transmembrane segment spans residues 129–152 (VPLLNTSVLLASGVSITWAHHSLM). Topologically, residues 153 to 155 (ENN) are mitochondrial matrix. The helical transmembrane segment at 156-183 (RNQMIQALLITILLGLYFTLLQASEYFE) threads the bilayer. Residues 184–190 (SPFTISD) lie on the Mitochondrial intermembrane side of the membrane. Residues 191–223 (GIYGSTFFVATGFHGLHVIIGSTFLTICFIRQL) form a helical membrane-spanning segment. The Mitochondrial matrix portion of the chain corresponds to 224-232 (MFHFTSKHH). The chain crosses the membrane as a helical span at residues 233–256 (FGFEAAAWYWHFVDVVWLFLYVSI). Over 257 to 261 (YWWGS) the chain is Mitochondrial intermembrane.

The protein belongs to the cytochrome c oxidase subunit 3 family. As to quaternary structure, component of the cytochrome c oxidase (complex IV, CIV), a multisubunit enzyme composed of 14 subunits. The complex is composed of a catalytic core of 3 subunits MT-CO1, MT-CO2 and MT-CO3, encoded in the mitochondrial DNA, and 11 supernumerary subunits COX4I1 (or COX4I2), COX5A, COX5B, COX6A1 (or COX6A2), COX6B1 (or COX6B2), COX6C, COX7A2 (or COX7A1), COX7B, COX7C, COX8A and NDUFA4, which are encoded in the nuclear genome. The complex exists as a monomer or a dimer and forms supercomplexes (SCs) in the inner mitochondrial membrane with NADH-ubiquinone oxidoreductase (complex I, CI) and ubiquinol-cytochrome c oxidoreductase (cytochrome b-c1 complex, complex III, CIII), resulting in different assemblies (supercomplex SCI(1)III(2)IV(1) and megacomplex MCI(2)III(2)IV(2)).

Its subcellular location is the mitochondrion inner membrane. It carries out the reaction 4 Fe(II)-[cytochrome c] + O2 + 8 H(+)(in) = 4 Fe(III)-[cytochrome c] + 2 H2O + 4 H(+)(out). Functionally, component of the cytochrome c oxidase, the last enzyme in the mitochondrial electron transport chain which drives oxidative phosphorylation. The respiratory chain contains 3 multisubunit complexes succinate dehydrogenase (complex II, CII), ubiquinol-cytochrome c oxidoreductase (cytochrome b-c1 complex, complex III, CIII) and cytochrome c oxidase (complex IV, CIV), that cooperate to transfer electrons derived from NADH and succinate to molecular oxygen, creating an electrochemical gradient over the inner membrane that drives transmembrane transport and the ATP synthase. Cytochrome c oxidase is the component of the respiratory chain that catalyzes the reduction of oxygen to water. Electrons originating from reduced cytochrome c in the intermembrane space (IMS) are transferred via the dinuclear copper A center (CU(A)) of subunit 2 and heme A of subunit 1 to the active site in subunit 1, a binuclear center (BNC) formed by heme A3 and copper B (CU(B)). The BNC reduces molecular oxygen to 2 water molecules using 4 electrons from cytochrome c in the IMS and 4 protons from the mitochondrial matrix. The polypeptide is Cytochrome c oxidase subunit 3 (MT-CO3) (Homo sapiens (Human)).